A 386-amino-acid polypeptide reads, in one-letter code: Terpene cyclase 6 (386 aa).

The Mg(2+) site is built by Asp-128, Asn-276, and Ser-280. Positions 128-132 (DDEID) match the D(D/E)XX(D/E) motif motif. Residues 276–284 (NEILSLQKE) carry the NSE motif motif. The WxxxxxRY motif motif lies at 360–367 (WSYNCERY). Residues Arg-366 and Tyr-367 each contribute to the (2E,6E)-farnesyl diphosphate site.

The protein belongs to the terpene synthase family. In terms of assembly, homodimer. Requires Mg(2+) as cofactor.

It catalyses the reaction (2E,6E)-farnesyl diphosphate + H2O = trichobrasilenol + diphosphate. The catalysed reaction is (2E,6E)-farnesyl diphosphate = alpha-humulene + diphosphate. It carries out the reaction (2E,6E)-farnesyl diphosphate = (-)-(E)-beta-caryophyllene + diphosphate. The enzyme catalyses (2E,6E)-farnesyl diphosphate = (E)-2-epi-beta-caryophyllene + diphosphate. It catalyses the reaction (2E,6E)-farnesyl diphosphate + H2O = (+)-isoafricanol + diphosphate. The catalysed reaction is (2E,6E)-farnesyl diphosphate + H2O = (+)-(2S,3R,9R)-pristinol + diphosphate. It carries out the reaction (2E,6E)-farnesyl diphosphate = african-3-ene + diphosphate. The enzyme catalyses (2E,6E)-farnesyl diphosphate = african-1-ene + diphosphate. Its pathway is sesquiterpene biosynthesis. Functionally, terpene cyclase that is able to convert FPP into a mixture of sesquiterpene hydrocarbons and alcohols. The main product is trichobrasilenol. Additionally, side products include alpha-humulene, caryophyllene, 2-epi-caryophyllene, african-3-ene, african-1-ene, isoafricanol and pristinol. Does not accept GPP, GGPP, and GFPP as substrates. The polypeptide is Terpene cyclase 6 (Hypocrea atroviridis (Trichoderma atroviride)).